We begin with the raw amino-acid sequence, 436 residues long: Chorion-specific transcription factor GCMa (436 aa).

Residues Leu-14–Met-169 constitute a DNA-binding region (GCM). Residues Cys-76, Cys-82, Cys-86, Cys-113, Cys-116, Cys-125, His-152, and His-154 each coordinate Zn(2+). The interval Lys-171 to Leu-202 is disordered. A compositionally biased stretch (polar residues) spans Thr-174–Leu-202.

Polyubiquitinated in the presence of UBE2D2 and FBXW2 (in vitro). In terms of tissue distribution, highly expressed in the placenta. Expressed in trophoblast cells of the villi.

The protein resides in the nucleus. Transcription factor involved in the control of expression of placental growth factor (PGF) and other placenta-specific genes. Binds to the trophoblast-specific element 2 (TSE2) of the aromatase gene enhancer. Binds to the SYDE1 promoter. Has a central role in mediating the differentiation of trophoblast cells along both the villous and extravillous pathways in placental development. The polypeptide is Chorion-specific transcription factor GCMa (GCM1) (Homo sapiens (Human)).